A 217-amino-acid chain; its full sequence is Elongation factor Ts (217 aa).

Residues 80 to 83 (TDFV) form an involved in Mg(2+) ion dislocation from EF-Tu region.

Belongs to the EF-Ts family.

The protein resides in the cytoplasm. Its function is as follows. Associates with the EF-Tu.GDP complex and induces the exchange of GDP to GTP. It remains bound to the aminoacyl-tRNA.EF-Tu.GTP complex up to the GTP hydrolysis stage on the ribosome. The chain is Elongation factor Ts from Carboxydothermus hydrogenoformans (strain ATCC BAA-161 / DSM 6008 / Z-2901).